The following is a 168-amino-acid chain: Phosphopantetheine adenylyltransferase (168 aa).

Threonine 14 contacts substrate. Residues threonine 14–phenylalanine 15 and histidine 22 contribute to the ATP site. Positions 46, 78, and 92 each coordinate substrate. ATP-binding positions include glycine 93–arginine 95, glutamate 103, and tyrosine 128–serine 134.

This sequence belongs to the bacterial CoaD family. Homohexamer. Mg(2+) serves as cofactor.

Its subcellular location is the cytoplasm. It catalyses the reaction (R)-4'-phosphopantetheine + ATP + H(+) = 3'-dephospho-CoA + diphosphate. It functions in the pathway cofactor biosynthesis; coenzyme A biosynthesis; CoA from (R)-pantothenate: step 4/5. Reversibly transfers an adenylyl group from ATP to 4'-phosphopantetheine, yielding dephospho-CoA (dPCoA) and pyrophosphate. This is Phosphopantetheine adenylyltransferase from Xanthomonas oryzae pv. oryzae (strain MAFF 311018).